The chain runs to 162 residues: UPF0114 protein PSPA7_5214 (162 aa).

The next 3 helical transmembrane spans lie at 15-35 (LLAP…IKFF), 53-73 (LILV…LVMV), and 136-156 (LMWY…MGYL).

The protein belongs to the UPF0114 family.

Its subcellular location is the cell membrane. In Pseudomonas paraeruginosa (strain DSM 24068 / PA7) (Pseudomonas aeruginosa (strain PA7)), this protein is UPF0114 protein PSPA7_5214.